The sequence spans 405 residues: Arginine biosynthesis bifunctional protein ArgJ (405 aa).

6 residues coordinate substrate: T152, K178, T189, E276, N400, and T405. Residue T189 is the Nucleophile of the active site.

The protein belongs to the ArgJ family. In terms of assembly, heterotetramer of two alpha and two beta chains.

The protein localises to the cytoplasm. The catalysed reaction is N(2)-acetyl-L-ornithine + L-glutamate = N-acetyl-L-glutamate + L-ornithine. It catalyses the reaction L-glutamate + acetyl-CoA = N-acetyl-L-glutamate + CoA + H(+). It functions in the pathway amino-acid biosynthesis; L-arginine biosynthesis; L-ornithine and N-acetyl-L-glutamate from L-glutamate and N(2)-acetyl-L-ornithine (cyclic): step 1/1. It participates in amino-acid biosynthesis; L-arginine biosynthesis; N(2)-acetyl-L-ornithine from L-glutamate: step 1/4. Functionally, catalyzes two activities which are involved in the cyclic version of arginine biosynthesis: the synthesis of N-acetylglutamate from glutamate and acetyl-CoA as the acetyl donor, and of ornithine by transacetylation between N(2)-acetylornithine and glutamate. This Pseudomonas fluorescens (strain ATCC BAA-477 / NRRL B-23932 / Pf-5) protein is Arginine biosynthesis bifunctional protein ArgJ.